The chain runs to 414 residues: Serine hydroxymethyltransferase (414 aa).

(6S)-5,6,7,8-tetrahydrofolate contacts are provided by residues Leu-121 and 125–127 (GHL). N6-(pyridoxal phosphate)lysine is present on Lys-229.

Belongs to the SHMT family. As to quaternary structure, homodimer. Pyridoxal 5'-phosphate serves as cofactor.

It is found in the cytoplasm. It catalyses the reaction (6R)-5,10-methylene-5,6,7,8-tetrahydrofolate + glycine + H2O = (6S)-5,6,7,8-tetrahydrofolate + L-serine. It participates in one-carbon metabolism; tetrahydrofolate interconversion. It functions in the pathway amino-acid biosynthesis; glycine biosynthesis; glycine from L-serine: step 1/1. Its function is as follows. Catalyzes the reversible interconversion of serine and glycine with tetrahydrofolate (THF) serving as the one-carbon carrier. This reaction serves as the major source of one-carbon groups required for the biosynthesis of purines, thymidylate, methionine, and other important biomolecules. Also exhibits THF-independent aldolase activity toward beta-hydroxyamino acids, producing glycine and aldehydes, via a retro-aldol mechanism. The polypeptide is Serine hydroxymethyltransferase (Polynucleobacter asymbioticus (strain DSM 18221 / CIP 109841 / QLW-P1DMWA-1) (Polynucleobacter necessarius subsp. asymbioticus)).